The following is a 204-amino-acid chain: Large ribosomal subunit protein bL25 (204 aa).

Belongs to the bacterial ribosomal protein bL25 family. CTC subfamily. As to quaternary structure, part of the 50S ribosomal subunit; part of the 5S rRNA/L5/L18/L25 subcomplex. Contacts the 5S rRNA. Binds to the 5S rRNA independently of L5 and L18.

In terms of biological role, this is one of the proteins that binds to the 5S RNA in the ribosome where it forms part of the central protuberance. In Rhizobium etli (strain ATCC 51251 / DSM 11541 / JCM 21823 / NBRC 15573 / CFN 42), this protein is Large ribosomal subunit protein bL25.